The sequence spans 252 residues: SPbeta prophage-derived uncharacterized protein YomH (252 aa).

The polypeptide is SPbeta prophage-derived uncharacterized protein YomH (yomH) (Bacillus subtilis (strain 168)).